Consider the following 55-residue polypeptide: Sec-independent protein translocase protein TatA (55 aa).

The helical transmembrane segment at M1–A21 threads the bilayer.

It belongs to the TatA/E family. In terms of assembly, the Tat system comprises two distinct complexes: a TatABC complex, containing multiple copies of TatA, TatB and TatC subunits, and a separate TatA complex, containing only TatA subunits. Substrates initially bind to the TatABC complex, which probably triggers association of the separate TatA complex to form the active translocon.

It localises to the cell inner membrane. Its function is as follows. Part of the twin-arginine translocation (Tat) system that transports large folded proteins containing a characteristic twin-arginine motif in their signal peptide across membranes. TatA could form the protein-conducting channel of the Tat system. This is Sec-independent protein translocase protein TatA from Rickettsia peacockii (strain Rustic).